A 356-amino-acid chain; its full sequence is Biotin synthase (356 aa).

The Radical SAM core domain maps to 54-278 (GEVQLCTLLS…VAVARITMPL (225 aa)). Positions 69, 73, and 76 each coordinate [4Fe-4S] cluster. 4 residues coordinate [2Fe-2S] cluster: Cys113, Cys144, Cys204, and Arg282.

It belongs to the radical SAM superfamily. Biotin synthase family. As to quaternary structure, homodimer. [4Fe-4S] cluster serves as cofactor. Requires [2Fe-2S] cluster as cofactor.

The catalysed reaction is (4R,5S)-dethiobiotin + (sulfur carrier)-SH + 2 reduced [2Fe-2S]-[ferredoxin] + 2 S-adenosyl-L-methionine = (sulfur carrier)-H + biotin + 2 5'-deoxyadenosine + 2 L-methionine + 2 oxidized [2Fe-2S]-[ferredoxin]. The protein operates within cofactor biosynthesis; biotin biosynthesis; biotin from 7,8-diaminononanoate: step 2/2. Catalyzes the conversion of dethiobiotin (DTB) to biotin by the insertion of a sulfur atom into dethiobiotin via a radical-based mechanism. The sequence is that of Biotin synthase from Novosphingobium aromaticivorans (strain ATCC 700278 / DSM 12444 / CCUG 56034 / CIP 105152 / NBRC 16084 / F199).